Reading from the N-terminus, the 123-residue chain is Large ribosomal subunit protein bL12 (123 aa).

It belongs to the bacterial ribosomal protein bL12 family. As to quaternary structure, homodimer. Part of the ribosomal stalk of the 50S ribosomal subunit. Forms a multimeric L10(L12)X complex, where L10 forms an elongated spine to which 2 to 4 L12 dimers bind in a sequential fashion. Binds GTP-bound translation factors.

Functionally, forms part of the ribosomal stalk which helps the ribosome interact with GTP-bound translation factors. Is thus essential for accurate translation. The sequence is that of Large ribosomal subunit protein bL12 from Bartonella quintana (strain Toulouse) (Rochalimaea quintana).